The primary structure comprises 304 residues: Thyroxine 5-deiodinase (304 aa).

Positions 1–22 are disordered; the sequence is MPRQAASRLVVGEGEGPPGASG. The Cytoplasmic portion of the chain corresponds to 1–44; sequence MPRQAASRLVVGEGEGPPGASGPAATMLRSLLLHSLRLCAQTAS. A helical; Signal-anchor for type II membrane protein membrane pass occupies residues 45 to 67; it reads CLVLFPRFLGTAFMLWLLDFLCI. Topologically, residues 68 to 304 are extracellular; sequence RKHFLRRRHP…QLHGTRPHRF (237 aa). Residue Sec-170 is part of the active site. Residue Sec-170 is a non-standard amino acid, selenocysteine.

The protein belongs to the iodothyronine deiodinase family. In terms of assembly, monomer. Homodimer. May undergo minor heretodimerization with DIO1 and DIO2.

It localises to the cell membrane. The protein localises to the endosome membrane. It carries out the reaction 3,3',5'-triiodo-L-thyronine + iodide + A + H(+) = L-thyroxine + AH2. The catalysed reaction is 3,3'-diiodo-L-thyronine + iodide + A + H(+) = 3,3',5-triiodo-L-thyronine + AH2. The enzyme catalyses 3-iodo-L-thyronine + iodide + A + H(+) = 3,5-diiodo-L-thyronine + AH2. It catalyses the reaction L-thyronine + iodide + A + H(+) = 3-iodo-L-thyronine + AH2. It carries out the reaction 3',5'-diiodo-L-thyronine + iodide + A + H(+) = 3,3',5'-triiodo-L-thyronine + AH2. The catalysed reaction is 3'-iodo-L-thyronine + iodide + A + H(+) = 3,3'-diiodo-L-thyronine + AH2. The enzyme catalyses 3,3',5'-triiodothyronamine + iodide + A + H(+) = 3,3',5,5'-tetraiodothyronamine + AH2. It catalyses the reaction 3',5'-diiodothyronamine + iodide + A + H(+) = 3,3',5'-triiodothyronamine + AH2. It carries out the reaction 3,3'-diiodothyronamine + iodide + A + H(+) = 3,3',5-triiodothyronamine + AH2. The catalysed reaction is 3-iodothyronamine + iodide + A + H(+) = 3,5-diiodothyronamine + AH2. The enzyme catalyses 3'-iodothyronamine + iodide + A + H(+) = 3,3'-diiodothyronamine + AH2. It catalyses the reaction thyronamine + iodide + A + H(+) = 3-iodothyronamine + AH2. Functionally, plays a crucial role in the metabolism of thyroid hormones (TH) and has specific roles in TH activation and inactivation by deiodination. Catalyzes the deiodination of L-thyroxine (T4) to 3,3',5'-triiodothyronine (rT3), 3,5,3'-triiodothyronine (T3) to 3,3'-diiodothyronine (3,3'-T2), 3,5-diiodothyronine (3,5-T2) to 3-monoiodothyronine (3-T1), rT3 to 3',5'-diiodothyronine (3',5'-T2) and 3,3'-T2 to 3'-monoiodothyronine (3'-T1) via inner-ring deiodination (IRD). Catalyzes the deiodination of 3-T1 to L-thyronine (T0) via outer-ring deiodination (ORD). Catalyzes the tyrosyl ring deiodinations of 3,3',5,5'-tetraiodothyronamine, 3,3',5'-triiodothyronamine, 3,5,3'-triiodothyronamine, 3,5-diiodothyronamine, 3,3'-diiodothyronamine and 3-iodothyronamine. The polypeptide is Thyroxine 5-deiodinase (Dio3) (Mus musculus (Mouse)).